A 589-amino-acid chain; its full sequence is Kelch-like protein 25 (589 aa).

In terms of domain architecture, BTB spans 46 to 114 (TDVTLWAGNR…AYSSKIIINE (69 aa)). Positions 149–250 (CLGMMILSDA…LPSELLKEAV (102 aa)) constitute a BACK domain. Kelch repeat units follow at residues 296 to 340 (TLLI…AIGC), 341 to 388 (KVYV…ELEN), 389 to 444 (CLYV…SAKL), 446 to 492 (LFAF…VLGS), 493 to 538 (QIFI…ASGN), and 539 to 585 (KVYV…STWK).

In terms of assembly, component of the BCR(KLHL25) E3 ubiquitin ligase complex, at least composed of cul3, klhl25 and rbx1.

The protein operates within protein modification; protein ubiquitination. Substrate-specific adapter of a BCR (BTB-CUL3-RBX1) E3 ubiquitin ligase complex involved in various processes, such as translation homeostasis and lipid synthesis. The BCR(KLHL25) ubiquitin ligase complex acts by mediating ubiquitination of hypophosphorylated eif4ebp1 (4E-BP1): ubiquitination and subsequent degradation of hypophosphorylated EIF4EBP1 (4E-BP1) probably serves as a homeostatic mechanism to maintain translation and prevent eIF4E inhibition when eIF4E levels are low. The BCR(KLHL25) complex also acts as a regulator of lipid synthesis by mediating ubiquitination and degradation of ACLY, thereby inhibiting lipid synthesis. This chain is Kelch-like protein 25, found in Xenopus tropicalis (Western clawed frog).